Here is a 222-residue protein sequence, read N- to C-terminus: Deoxyribose-phosphate aldolase (222 aa).

Aspartate 90 functions as the Proton donor/acceptor in the catalytic mechanism. The active-site Schiff-base intermediate with acetaldehyde is lysine 152. Lysine 181 serves as the catalytic Proton donor/acceptor.

Belongs to the DeoC/FbaB aldolase family. DeoC type 1 subfamily.

The protein localises to the cytoplasm. The catalysed reaction is 2-deoxy-D-ribose 5-phosphate = D-glyceraldehyde 3-phosphate + acetaldehyde. The protein operates within carbohydrate degradation; 2-deoxy-D-ribose 1-phosphate degradation; D-glyceraldehyde 3-phosphate and acetaldehyde from 2-deoxy-alpha-D-ribose 1-phosphate: step 2/2. Functionally, catalyzes a reversible aldol reaction between acetaldehyde and D-glyceraldehyde 3-phosphate to generate 2-deoxy-D-ribose 5-phosphate. The chain is Deoxyribose-phosphate aldolase from Pectobacterium atrosepticum (strain SCRI 1043 / ATCC BAA-672) (Erwinia carotovora subsp. atroseptica).